Reading from the N-terminus, the 97-residue chain is Integration host factor subunit alpha (97 aa).

The protein belongs to the bacterial histone-like protein family. Heterodimer of an alpha and a beta chain.

Its function is as follows. This protein is one of the two subunits of integration host factor, a specific DNA-binding protein that functions in genetic recombination as well as in transcriptional and translational control. This chain is Integration host factor subunit alpha, found in Hydrogenovibrio crunogenus (strain DSM 25203 / XCL-2) (Thiomicrospira crunogena).